Consider the following 101-residue polypeptide: Small ubiquitin-related modifier 1 (101 aa).

Position 2 is an N-acetylserine (S2). S2 is subject to Phosphoserine. K7 is covalently cross-linked (Glycyl lysine isopeptide (Lys-Gly) (interchain with G-Cter in SUMO1); alternate). Residue K7 forms a Glycyl lysine isopeptide (Lys-Gly) (interchain with G-Cter in SUMO2); alternate linkage. S9 is subject to Phosphoserine. Residues K16, K17, and K23 each participate in a glycyl lysine isopeptide (Lys-Gly) (interchain with G-Cter in SUMO2) cross-link. Residues K16–K25 form a (Microbial infection) Interaction with Tula hantavirus region. A Ubiquitin-like domain is found at E20–G97. Residue K25 forms a Glycyl lysine isopeptide (Lys-Gly) (interchain with G-Cter in SUMO1) linkage. S32 bears the Phosphoserine mark. Residues K37, K39, K45, and K46 each participate in a glycyl lysine isopeptide (Lys-Gly) (interchain with G-Cter in SUMO2) cross-link. Residues K37–M40 form a (Microbial infection) Interaction with Tula hantavirus region. Residue G97 forms a Glycyl lysine isopeptide (Gly-Lys) (interchain with K-? in acceptor proteins) linkage. The propeptide occupies H98–V101.

The protein belongs to the ubiquitin family. SUMO subfamily. In terms of assembly, covalently attached to KCNB1; UBE2I increases cross-linking with KCNB1 and PIAS1 decreases cross-links with KCNB1. Interacts with SAE2, RANBP2, PIAS1 and PIAS2. Interacts with PRKN. Covalently attached to a number of proteins such as IKFZ1, PML, RANGAP1, HIPK2, SP100, p53, p73-alpha, MDM2, JUN, DNMT3B and TDG. Also interacts with HIF1A, HIPK2, HIPK3, CHD3, EXOSC9, RAD51 and RAD52. Interacts with USP25 (via ts SIM domain); the interaction weakly sumoylates USP25. Interacts with SIMC1, CASP8AP2, RNF111 and SOBP (via SIM domains). Interacts with BHLHE40/DEC1. Interacts with RWDD3. Interacts with UBE2I/UBC9 and this interaction is enhanced in the presence of RWDD3. Interacts with MTA1. Interacts with SENP2. Interacts with HINT1. (Microbial infection) Interacts with Epstein-barr virus BGLF4. As to quaternary structure, (Microbial infection) Interacts (via N-terminus) with Tula hantavirus nucleoprotein. In terms of assembly, (Microbial infection) Interacts (via N-terminus) with Hantaan hantavirus nucleoprotein. In terms of processing, cleavage of precursor form by SENP1 or SENP2 is necessary for function. Polymeric SUMO1 chains undergo polyubiquitination by RNF4.

It localises to the nucleus membrane. The protein localises to the nucleus speckle. Its subcellular location is the cytoplasm. The protein resides in the nucleus. It is found in the PML body. It localises to the cell membrane. Its function is as follows. Ubiquitin-like protein that can be covalently attached to proteins as a monomer or a lysine-linked polymer. Covalent attachment via an isopeptide bond to its substrates requires prior activation by the E1 complex SAE1-SAE2 and linkage to the E2 enzyme UBE2I, and can be promoted by E3 ligases such as PIAS1-4, RANBP2 or CBX4. This post-translational modification on lysine residues of proteins plays a crucial role in a number of cellular processes such as nuclear transport, DNA replication and repair, mitosis and signal transduction. Involved for instance in targeting RANGAP1 to the nuclear pore complex protein RANBP2. Covalently attached to the voltage-gated potassium channel KCNB1; this modulates the gating characteristics of KCNB1. Polymeric SUMO1 chains are also susceptible to polyubiquitination which functions as a signal for proteasomal degradation of modified proteins. May also regulate a network of genes involved in palate development. Covalently attached to ZFHX3. The sequence is that of Small ubiquitin-related modifier 1 (SUMO1) from Homo sapiens (Human).